Consider the following 495-residue polypeptide: Aspartyl/glutamyl-tRNA(Asn/Gln) amidotransferase subunit B (495 aa).

This sequence belongs to the GatB/GatE family. GatB subfamily. In terms of assembly, heterotrimer of A, B and C subunits.

The catalysed reaction is L-glutamyl-tRNA(Gln) + L-glutamine + ATP + H2O = L-glutaminyl-tRNA(Gln) + L-glutamate + ADP + phosphate + H(+). It catalyses the reaction L-aspartyl-tRNA(Asn) + L-glutamine + ATP + H2O = L-asparaginyl-tRNA(Asn) + L-glutamate + ADP + phosphate + 2 H(+). Allows the formation of correctly charged Asn-tRNA(Asn) or Gln-tRNA(Gln) through the transamidation of misacylated Asp-tRNA(Asn) or Glu-tRNA(Gln) in organisms which lack either or both of asparaginyl-tRNA or glutaminyl-tRNA synthetases. The reaction takes place in the presence of glutamine and ATP through an activated phospho-Asp-tRNA(Asn) or phospho-Glu-tRNA(Gln). This is Aspartyl/glutamyl-tRNA(Asn/Gln) amidotransferase subunit B from Halobacterium salinarum (strain ATCC 700922 / JCM 11081 / NRC-1) (Halobacterium halobium).